The following is a 652-amino-acid chain: DNA ligase (652 aa).

NAD(+)-binding positions include 29–33, 78–79, and Glu-107; these read DSQYD and SL. Lys-109 acts as the N6-AMP-lysine intermediate in catalysis. NAD(+) contacts are provided by Arg-130, Glu-164, Lys-278, and Lys-302. Residues Cys-395, Cys-398, Cys-413, and Cys-418 each contribute to the Zn(2+) site. In terms of domain architecture, BRCT spans 577-652; that stretch reads STDAQLSGLT…IQDEDWLLNL (76 aa).

It belongs to the NAD-dependent DNA ligase family. LigA subfamily. It depends on Mg(2+) as a cofactor. The cofactor is Mn(2+).

The enzyme catalyses NAD(+) + (deoxyribonucleotide)n-3'-hydroxyl + 5'-phospho-(deoxyribonucleotide)m = (deoxyribonucleotide)n+m + AMP + beta-nicotinamide D-nucleotide.. Its function is as follows. DNA ligase that catalyzes the formation of phosphodiester linkages between 5'-phosphoryl and 3'-hydroxyl groups in double-stranded DNA using NAD as a coenzyme and as the energy source for the reaction. It is essential for DNA replication and repair of damaged DNA. The sequence is that of DNA ligase from Streptococcus agalactiae serotype V (strain ATCC BAA-611 / 2603 V/R).